A 220-amino-acid polypeptide reads, in one-letter code: MDLKQIAGEYAATFVKDGMKIGLGTGSTAYWTIQKLGQRVKEGLSIQAVPTSKETEALAQQLNIPLISLNDVQSLDLTIDGADEIDSNLQLIKGGGGALLREKIVASSSKELIIIVDESKVVTRLGTFPLPIEIIPFAWKQTESKIQSLGCQTTLRLKNNETFITDNNNMIIDCIFPNHIPTPSDLHKRLKMITGVVETGLFVNMTSKAIIGTKNGIQEL.

Residues 25 to 28, 80 to 83, and 93 to 96 each bind substrate; these read TGST, DGAD, and KGGG. Glutamate 102 acts as the Proton acceptor in catalysis. Lysine 120 provides a ligand contact to substrate.

It belongs to the ribose 5-phosphate isomerase family. Homodimer.

The catalysed reaction is aldehydo-D-ribose 5-phosphate = D-ribulose 5-phosphate. It functions in the pathway carbohydrate degradation; pentose phosphate pathway; D-ribose 5-phosphate from D-ribulose 5-phosphate (non-oxidative stage): step 1/1. Functionally, catalyzes the reversible conversion of ribose-5-phosphate to ribulose 5-phosphate. In Bacillus anthracis, this protein is Ribose-5-phosphate isomerase A.